A 253-amino-acid polypeptide reads, in one-letter code: MLIDWFTVIAELVNFLILVWLLKRFLYEPVLKAIDEREKKIASELQHAADVEKEAESRLIELQRKNEAFDNAHAQMIKDAEQEAVEEKRTLLNEAHREYDALRMRLQETLKHEETSLESRVTGRISAEVFSIARKVLQDLSGSSLEAQIADVFCQRLRESDPEDVAAMKDAVSRKSLNPLVRSTFPLSSSLQERIQAVVRDVFSIDTQLRFEEGDDMVGGIELSMNGHSVSWSVRSYLDSLEKMTAELLEGAE.

Residues L2–L22 form a helical membrane-spanning segment.

Belongs to the ATPase B chain family. F-type ATPases have 2 components, F(1) - the catalytic core - and F(0) - the membrane proton channel. F(1) has five subunits: alpha(3), beta(3), gamma(1), delta(1), epsilon(1). F(0) has four main subunits: a(1), b(2) and c(10-14). The alpha and beta chains form an alternating ring which encloses part of the gamma chain. F(1) is attached to F(0) by a central stalk formed by the gamma and epsilon chains, while a peripheral stalk is formed by the delta and b chains.

The protein resides in the cell inner membrane. Functionally, f(1)F(0) ATP synthase produces ATP from ADP in the presence of a proton or sodium gradient. F-type ATPases consist of two structural domains, F(1) containing the extramembraneous catalytic core and F(0) containing the membrane proton channel, linked together by a central stalk and a peripheral stalk. During catalysis, ATP synthesis in the catalytic domain of F(1) is coupled via a rotary mechanism of the central stalk subunits to proton translocation. Its function is as follows. Component of the F(0) channel, it forms part of the peripheral stalk, linking F(1) to F(0). The sequence is that of ATP synthase subunit b 1 from Prosthecochloris aestuarii (strain DSM 271 / SK 413).